Consider the following 98-residue polypeptide: Small ribosomal subunit protein uS19 (98 aa).

The protein belongs to the universal ribosomal protein uS19 family.

Protein S19 forms a complex with S13 that binds strongly to the 16S ribosomal RNA. The protein is Small ribosomal subunit protein uS19 of Chlorobaculum parvum (strain DSM 263 / NCIMB 8327) (Chlorobium vibrioforme subsp. thiosulfatophilum).